The following is a 212-amino-acid chain: Thymidylate kinase (212 aa).

10–17 (GLEGAGKT) is a binding site for ATP.

This sequence belongs to the thymidylate kinase family.

The enzyme catalyses dTMP + ATP = dTDP + ADP. Phosphorylation of dTMP to form dTDP in both de novo and salvage pathways of dTTP synthesis. The sequence is that of Thymidylate kinase from Photorhabdus laumondii subsp. laumondii (strain DSM 15139 / CIP 105565 / TT01) (Photorhabdus luminescens subsp. laumondii).